Reading from the N-terminus, the 315-residue chain is tRNA dimethylallyltransferase (315 aa).

Residue 10 to 17 coordinates ATP; it reads GPTGVGKT. Residue 12-17 coordinates substrate; the sequence is TGVGKT. Residues 35–38 form an interaction with substrate tRNA region; sequence DSMQ.

This sequence belongs to the IPP transferase family. In terms of assembly, monomer. Requires Mg(2+) as cofactor.

The enzyme catalyses adenosine(37) in tRNA + dimethylallyl diphosphate = N(6)-dimethylallyladenosine(37) in tRNA + diphosphate. Catalyzes the transfer of a dimethylallyl group onto the adenine at position 37 in tRNAs that read codons beginning with uridine, leading to the formation of N6-(dimethylallyl)adenosine (i(6)A). The chain is tRNA dimethylallyltransferase from Thermodesulfovibrio yellowstonii (strain ATCC 51303 / DSM 11347 / YP87).